A 140-amino-acid polypeptide reads, in one-letter code: Ribosome maturation factor RimP (140 aa).

This sequence belongs to the RimP family.

The protein resides in the cytoplasm. In terms of biological role, required for maturation of 30S ribosomal subunits. This chain is Ribosome maturation factor RimP, found in Campylobacter jejuni subsp. jejuni serotype O:2 (strain ATCC 700819 / NCTC 11168).